The primary structure comprises 101 residues: Replication restart protein PriB (101 aa).

Residues 1-101 form the SSB domain; that stretch reads MTTNNLVLSG…IHAENVELKT (101 aa).

The protein belongs to the PriB family. As to quaternary structure, homodimer. Interacts with PriA and DnaT. Component of the replication restart primosome. Primosome assembly occurs via a 'hand-off' mechanism. PriA binds to replication forks, subsequently PriB then DnaT bind; DnaT then displaces ssDNA to generate the helicase loading substrate.

In terms of biological role, involved in the restart of stalled replication forks, which reloads the replicative helicase on sites other than the origin of replication; the PriA-PriB pathway is the major replication restart pathway. During primosome assembly it facilitates complex formation between PriA and DnaT on DNA; stabilizes PriA on DNA. Stimulates the DNA unwinding activity of PriA helicase. In Shewanella oneidensis (strain ATCC 700550 / JCM 31522 / CIP 106686 / LMG 19005 / NCIMB 14063 / MR-1), this protein is Replication restart protein PriB.